Consider the following 140-residue polypeptide: Chromatin accessibility complex 16kD protein (140 aa).

The disordered stretch occupies residues L111–E140. Positions S117–E140 are enriched in acidic residues.

Component of the chromatin accessibility complex (CHRAC), composed of Chrac-14, Chrac-16, Acf and Iswi. Forms a heterodimer with Chrac-14. The Chrac-14/Chrac-16 heterodimer interacts with Acf (via N-terminus). Stabilizes the interaction between Chrac-14 and Iswi.

It localises to the nucleus. Histone-like protein which promotes nucleosome sliding of ATP-dependent nucleosome remodeling complexes. Part of the chromatin-accessibility complex (CHRAC) which uses energy/ATP to increase the general accessibility of DNA in chromatin. As a heterodimer with Chrac-14, binds DNA and facilitates nucleosome sliding by Acf. As part of the CHRAC complex, required for oogenesis. The sequence is that of Chromatin accessibility complex 16kD protein from Drosophila melanogaster (Fruit fly).